Reading from the N-terminus, the 578-residue chain is Septation ring formation regulator EzrA (578 aa).

The Extracellular segment spans residues 1 to 8 (MKNNWIII). A helical transmembrane segment spans residues 9–27 (LVLVIVIIAAVLYLIGYFM). The Cytoplasmic portion of the chain corresponds to 28–578 (RKKNQEQLDE…NINNPNLTAI (551 aa)). 3 coiled-coil regions span residues 103–165 (RFMK…DDKA), 256–285 (QNFAEEIQHAKKRVENSMADLEKTEIAAVE), and 394–490 (KILD…DDLE).

This sequence belongs to the EzrA family.

Its subcellular location is the cell membrane. Its function is as follows. Negative regulator of FtsZ ring formation; modulates the frequency and position of FtsZ ring formation. Inhibits FtsZ ring formation at polar sites. Interacts either with FtsZ or with one of its binding partners to promote depolymerization. This chain is Septation ring formation regulator EzrA, found in Enterococcus faecalis (strain ATCC 700802 / V583).